We begin with the raw amino-acid sequence, 225 residues long: Ribose-5-phosphate isomerase A (225 aa).

Substrate contacts are provided by residues 33 to 36, 84 to 87, and 96 to 99; these read TGST, DGAD, and KGGG. The active-site Proton acceptor is the Glu-105. Lys-123 provides a ligand contact to substrate.

This sequence belongs to the ribose 5-phosphate isomerase family. As to quaternary structure, homodimer.

The enzyme catalyses aldehydo-D-ribose 5-phosphate = D-ribulose 5-phosphate. It participates in carbohydrate degradation; pentose phosphate pathway; D-ribose 5-phosphate from D-ribulose 5-phosphate (non-oxidative stage): step 1/1. Its function is as follows. Catalyzes the reversible conversion of ribose-5-phosphate to ribulose 5-phosphate. The sequence is that of Ribose-5-phosphate isomerase A from Halobacterium salinarum (strain ATCC 29341 / DSM 671 / R1).